The primary structure comprises 635 residues: Threonine--tRNA ligase (635 aa).

The interval 1–152 (MQLLLIHSDY…AKAAVKPEAA (152 aa)) is editing domain. The segment at 215–514 (PHVELMRRLE…TEEGKVPMLP (300 aa)) is catalytic. Cys-307, His-359, and His-483 together coordinate Zn(2+).

The protein belongs to the class-II aminoacyl-tRNA synthetase family. Homodimer. Zn(2+) serves as cofactor.

The protein localises to the cytoplasm. The enzyme catalyses tRNA(Thr) + L-threonine + ATP = L-threonyl-tRNA(Thr) + AMP + diphosphate + H(+). In terms of biological role, catalyzes the attachment of threonine to tRNA(Thr) in a two-step reaction: L-threonine is first activated by ATP to form Thr-AMP and then transferred to the acceptor end of tRNA(Thr). Also edits incorrectly charged L-seryl-tRNA(Thr). This Methanosarcina acetivorans (strain ATCC 35395 / DSM 2834 / JCM 12185 / C2A) protein is Threonine--tRNA ligase.